A 757-amino-acid chain; its full sequence is MDVNPTLLFLKVPAQNAISTTFPYTGDPPYSHGTGTGYTMDTVNRTHQYSEKGKWTTNTETGAPQLNPIDGPLPEDNEPSGYAQTDCVLEAMAFLEESHPGIFENSCLETMEVVQQTRVDRLTQGRQTYDWTLNRNQPAATALANTIEVFRSNGLTANESGRLIDFLKDVMESMDKEEMEITTHFQRKRRVRDNMTKKMVTQRTIGKKKQRVNKRSYLIRALTLNTMTKDAERGKLKRRAIATPGMQIRGFVYFVETLARSICEKLEQSGLPVGGNEKKAKLANVVRKMMTNSQDTELSFTITGDNTKWNENQNPRMFLAMITYITKNQPEWFRNILSIAPIMFSNKMARLGKGYMFESKRMKLRTQIPAEMLASIDLKYFNESTRKKIEKIRPLLIDGTASLSPGMMMGMFNMLSTVLGVSILNLGQKKYTKTTYWWDGLQSSDDFALIVNAPNHEGIQAGVDRFYRTCKLVGINMSKKKSYINRTGTFEFTSFFYRYGFVANFSMELPSFGVSGINESADMSIGVTVIKNNMINNDLGPATAQMALQLFIKDYRYTYRCHRGDTQIQTRRSFELKKLWEQTRSKAGLLVSDGGPNLYNIRNLHIPEVCLKWELMDEDYQGRLCNPLNPFVSHKEIESVNNAVVMPAHGPAKSMEYDAVATTHSWIPKRNRSILNTSQRGILEDEQMYQKCCNLFEKFFPSSSYRRPVGISSMVEAMVSRARIDARIDFESGRIKKEEFAEIMKICSTIEELRRQK.

Residues 50 to 82 (SEKGKWTTNTETGAPQLNPIDGPLPEDNEPSGY) form a disordered region. Polar residues predominate over residues 55–64 (WTTNTETGAP). 2 short sequence motifs (nuclear localization signal) span residues 187–195 (RKRRVRDNM) and 203–216 (RTIG…NKRS). Positions 249–256 (RGFVYFVE) are promoter-binding site. Positions 286–483 (VRKMMTNSQD…GINMSKKKSY (198 aa)) constitute a RdRp catalytic domain.

The protein belongs to the influenza viruses polymerase PB1 family. Influenza RNA polymerase is composed of three subunits: PB1, PB2 and PA. Interacts (via N-terminus) with PA (via C-terminus). Interacts (via C-terminus) with PB2 (via N-terminus); this interaction is essential for transcription initiation. In terms of processing, phosphorylated by host PRKCA.

It is found in the host nucleus. It localises to the host cytoplasm. The enzyme catalyses RNA(n) + a ribonucleoside 5'-triphosphate = RNA(n+1) + diphosphate. RNA-dependent RNA polymerase which is responsible for replication and transcription of virus RNA segments. The transcription of viral mRNAs occurs by a unique mechanism called cap-snatching. 5' methylated caps of cellular mRNAs are cleaved after 10-13 nucleotides by PA. In turn, these short capped RNAs are used as primers by PB1 for transcription of viral mRNAs. During virus replication, PB1 initiates RNA synthesis and copy vRNA into complementary RNA (cRNA) which in turn serves as a template for the production of more vRNAs. The sequence is that of RNA-directed RNA polymerase catalytic subunit from Influenza A virus (strain A/Udorn/307/1972 H3N2).